An 85-amino-acid polypeptide reads, in one-letter code: Toxin BmKa1 (85 aa).

An N-terminal signal peptide occupies residues 1–19 (MNYLVFFSLALLLMTGVGS). In terms of domain architecture, LCN-type CS-alpha/beta spans 21–83 (RDGYIADDKN…VPIRVPGKCN (63 aa)). Cystine bridges form between C31-C82, C35-C55, C41-C65, and C45-C67.

Belongs to the long (4 C-C) scorpion toxin superfamily. Sodium channel inhibitor family. Alpha subfamily. As to expression, expressed by the venom gland.

It is found in the secreted. Its function is as follows. Alpha toxins bind voltage-independently at site-3 of sodium channels (Nav) and inhibit the inactivation of the activated channels, thereby blocking neuronal transmission. The chain is Toxin BmKa1 from Olivierus martensii (Manchurian scorpion).